A 399-amino-acid chain; its full sequence is S-adenosylmethionine synthase (399 aa).

Residue His-17 coordinates ATP. Asp-19 serves as a coordination point for Mg(2+). Glu-45 contributes to the K(+) binding site. Residues Glu-58 and Gln-101 each coordinate L-methionine. Residues 101–111 are flexible loop; sequence QSADIAMGVDQ. ATP contacts are provided by residues 177–179, 244–245, Asp-253, 259–260, Ala-276, and Lys-280; these read DGK, RF, and RK. Residue Asp-253 participates in L-methionine binding. Residue Lys-284 participates in L-methionine binding.

This sequence belongs to the AdoMet synthase family. Homotetramer; dimer of dimers. It depends on Mg(2+) as a cofactor. The cofactor is K(+).

Its subcellular location is the cytoplasm. It catalyses the reaction L-methionine + ATP + H2O = S-adenosyl-L-methionine + phosphate + diphosphate. It participates in amino-acid biosynthesis; S-adenosyl-L-methionine biosynthesis; S-adenosyl-L-methionine from L-methionine: step 1/1. Catalyzes the formation of S-adenosylmethionine (AdoMet) from methionine and ATP. The overall synthetic reaction is composed of two sequential steps, AdoMet formation and the subsequent tripolyphosphate hydrolysis which occurs prior to release of AdoMet from the enzyme. The chain is S-adenosylmethionine synthase from Bacillus cereus (strain B4264).